A 115-amino-acid chain; its full sequence is NADH-ubiquinone oxidoreductase chain 3 (115 aa).

3 helical membrane-spanning segments follow: residues 4–24 (LMAL…AFWL), 55–75 (FFLV…LLPL), and 86–106 (TMML…AYEW).

This sequence belongs to the complex I subunit 3 family. Core subunit of respiratory chain NADH dehydrogenase (Complex I) which is composed of 45 different subunits. Interacts with TMEM186. Interacts with TMEM242.

It is found in the mitochondrion inner membrane. The catalysed reaction is a ubiquinone + NADH + 5 H(+)(in) = a ubiquinol + NAD(+) + 4 H(+)(out). In terms of biological role, core subunit of the mitochondrial membrane respiratory chain NADH dehydrogenase (Complex I) which catalyzes electron transfer from NADH through the respiratory chain, using ubiquinone as an electron acceptor. Essential for the catalytic activity of complex I. The chain is NADH-ubiquinone oxidoreductase chain 3 from Peromyscus gossypinus (Cotton deermouse).